The chain runs to 237 residues: Isoprenyl transferase (237 aa).

D14 is a catalytic residue. D14 provides a ligand contact to Mg(2+). Substrate contacts are provided by residues 15–18 (GNGR), W19, R27, H31, and 59–61 (STE). Residue N62 is the Proton acceptor of the active site. Substrate contacts are provided by residues W63, R65, R184, and 190–192 (RIS). E203 lines the Mg(2+) pocket.

Belongs to the UPP synthase family. Homodimer. Mg(2+) serves as cofactor.

Catalyzes the condensation of isopentenyl diphosphate (IPP) with allylic pyrophosphates generating different type of terpenoids. The sequence is that of Isoprenyl transferase from Helicobacter hepaticus (strain ATCC 51449 / 3B1).